We begin with the raw amino-acid sequence, 380 residues long: Erythronate-4-phosphate dehydrogenase (380 aa).

Substrate-binding residues include S45 and T66. Residues 126 to 127 (QV), D146, T175, 206 to 208 (ASR), and D232 each bind NAD(+). R208 is a catalytic residue. Residue E237 is part of the active site. Catalysis depends on H254, which acts as the Proton donor. Residue G257 participates in NAD(+) binding. Residue Y258 coordinates substrate.

It belongs to the D-isomer specific 2-hydroxyacid dehydrogenase family. PdxB subfamily. As to quaternary structure, homodimer.

The protein localises to the cytoplasm. It catalyses the reaction 4-phospho-D-erythronate + NAD(+) = (R)-3-hydroxy-2-oxo-4-phosphooxybutanoate + NADH + H(+). It participates in cofactor biosynthesis; pyridoxine 5'-phosphate biosynthesis; pyridoxine 5'-phosphate from D-erythrose 4-phosphate: step 2/5. In terms of biological role, catalyzes the oxidation of erythronate-4-phosphate to 3-hydroxy-2-oxo-4-phosphonooxybutanoate. The protein is Erythronate-4-phosphate dehydrogenase of Pseudomonas paraeruginosa (strain DSM 24068 / PA7) (Pseudomonas aeruginosa (strain PA7)).